Here is a 393-residue protein sequence, read N- to C-terminus: Putative competence-damage inducible protein (393 aa).

The protein belongs to the CinA family.

This Streptococcus suis (strain 98HAH33) protein is Putative competence-damage inducible protein.